Here is a 222-residue protein sequence, read N- to C-terminus: Urease accessory protein UreF (222 aa).

The protein belongs to the UreF family. UreD, UreF and UreG form a complex that acts as a GTP-hydrolysis-dependent molecular chaperone, activating the urease apoprotein by helping to assemble the nickel containing metallocenter of UreC. The UreE protein probably delivers the nickel.

The protein resides in the cytoplasm. Functionally, required for maturation of urease via the functional incorporation of the urease nickel metallocenter. The sequence is that of Urease accessory protein UreF from Roseobacter denitrificans (strain ATCC 33942 / OCh 114) (Erythrobacter sp. (strain OCh 114)).